Reading from the N-terminus, the 319-residue chain is Acetyl-coenzyme A carboxylase carboxyl transferase subunit alpha (319 aa).

Residues 36–293 form the CoA carboxyltransferase C-terminal domain; that stretch reads EVERLKTKLE…HDAFLSELDR (258 aa).

Belongs to the AccA family. Acetyl-CoA carboxylase is a heterohexamer composed of biotin carboxyl carrier protein (AccB), biotin carboxylase (AccC) and two subunits each of ACCase subunit alpha (AccA) and ACCase subunit beta (AccD).

Its subcellular location is the cytoplasm. It catalyses the reaction N(6)-carboxybiotinyl-L-lysyl-[protein] + acetyl-CoA = N(6)-biotinyl-L-lysyl-[protein] + malonyl-CoA. It functions in the pathway lipid metabolism; malonyl-CoA biosynthesis; malonyl-CoA from acetyl-CoA: step 1/1. Its function is as follows. Component of the acetyl coenzyme A carboxylase (ACC) complex. First, biotin carboxylase catalyzes the carboxylation of biotin on its carrier protein (BCCP) and then the CO(2) group is transferred by the carboxyltransferase to acetyl-CoA to form malonyl-CoA. The sequence is that of Acetyl-coenzyme A carboxylase carboxyl transferase subunit alpha from Dichelobacter nodosus (strain VCS1703A).